The chain runs to 268 residues: Ubiquinone biosynthesis protein COQ4 homolog, mitochondrial (268 aa).

4 residues coordinate Zn(2+): His171, Asp172, His175, and Glu187.

This sequence belongs to the COQ4 family. In terms of assembly, component of a multi-subunit COQ enzyme complex. Zn(2+) serves as cofactor.

It localises to the mitochondrion inner membrane. The catalysed reaction is a 4-hydroxy-3-methoxy-5-(all-trans-polyprenyl)benzoate + H(+) = a 2-methoxy-6-(all-trans-polyprenyl)phenol + CO2. Its pathway is cofactor biosynthesis; ubiquinone biosynthesis. Functionally, lyase that catalyzes the C1-decarboxylation of 4-hydroxy-3-methoxy-5-(all-trans-polyprenyl)benzoic acid into 2-methoxy-6-(all-trans-polyprenyl)phenol during ubiquinone biosynthesis. The polypeptide is Ubiquinone biosynthesis protein COQ4 homolog, mitochondrial (Drosophila erecta (Fruit fly)).